Reading from the N-terminus, the 199-residue chain is Superoxide dismutase [Fe] (199 aa).

4 residues coordinate Fe cation: His28, His80, Asp162, and His166.

Belongs to the iron/manganese superoxide dismutase family. Homodimer. Fe cation is required as a cofactor.

The protein resides in the cytoplasm. It carries out the reaction 2 superoxide + 2 H(+) = H2O2 + O2. Functionally, destroys superoxide anion radicals which are normally produced within the cells and which are toxic to biological systems. This is Superoxide dismutase [Fe] (sodB) from Leptolyngbya boryana (Plectonema boryanum).